Reading from the N-terminus, the 526-residue chain is Dolichyl pyrophosphate Glc1Man9GlcNAc2 alpha-1,3-glucosyltransferase (526 aa).

11 helical membrane passes run 4-24 (FGIATGGSNWFSALALGVTLL), 103-122 (LLFQRFSVIFTDALFVYAVH), 143-163 (FILSALLLWNFGLLIVDHIHF), 188-208 (GAFLFAVLLHFKHIYLYVAPA), 238-258 (LISLGLIVFLVSALSLGPFLA), 334-354 (PLATFICTLIAMLPSVFCLWC), 368-388 (LCALSSFMFGWHVHEKAILLA), 389-409 (VLPMSLLSVGKAVDASIFLIL), 427-449 (LPIKIILMLLFTIYSISSLKTLF), 461-481 (TFYLLGLGPLEVFCEFVFPFT), and 488-508 (PFIPLLLTSVYCAVGITYAWL).

It belongs to the ALG6/ALG8 glucosyltransferase family.

The protein resides in the endoplasmic reticulum membrane. It carries out the reaction an alpha-D-Glc-(1-&gt;3)-alpha-D-Man-(1-&gt;2)-alpha-D-Man-(1-&gt;2)-alpha-D-Man-(1-&gt;3)-[alpha-D-Man-(1-&gt;2)-alpha-D-Man-(1-&gt;3)-[alpha-D-Man-(1-&gt;2)-alpha-D-Man-(1-&gt;6)]-alpha-D-Man-(1-&gt;6)]-beta-D-Man-(1-&gt;4)-beta-D-GlcNAc-(1-&gt;4)-alpha-D-GlcNAc-diphospho-di-trans,poly-cis-dolichol + a di-trans,poly-cis-dolichyl beta-D-glucosyl phosphate = an alpha-D-Glc-(1-&gt;3)-alpha-D-Glc-(1-&gt;3)-alpha-D-Man-(1-&gt;2)-alpha-D-Man-(1-&gt;2)-alpha-D-Man-(1-&gt;3)-[alpha-D-Man-(1-&gt;2)-alpha-D-Man-(1-&gt;3)-[alpha-D-Man-(1-&gt;2)-alpha-D-Man-(1-&gt;6)]-alpha-D-Man-(1-&gt;6)]-beta-D-Man-(1-&gt;4)-beta-D-GlcNAc-(1-&gt;4)-alpha-D-GlcNAc-diphospho-di-trans,poly-cis-dolichol + a di-trans,poly-cis-dolichyl phosphate + H(+). It functions in the pathway protein modification; protein glycosylation. Dolichyl pyrophosphate Glc1Man9GlcNAc2 alpha-1,3-glucosyltransferase that operates in the biosynthetic pathway of dolichol-linked oligosaccharides, the glycan precursors employed in protein asparagine (N)-glycosylation. The assembly of dolichol-linked oligosaccharides begins on the cytosolic side of the endoplasmic reticulum membrane and finishes in its lumen. The sequential addition of sugars to dolichol pyrophosphate produces dolichol-linked oligosaccharides containing fourteen sugars, including two GlcNAcs, nine mannoses and three glucoses. Once assembled, the oligosaccharide is transferred from the lipid to nascent proteins by oligosaccharyltransferases. In the lumen of the endoplasmic reticulum, adds the second glucose residue from dolichyl phosphate glucose (Dol-P-Glc) onto the lipid-linked oligosaccharide intermediate Glc(1)Man(9)GlcNAc(2)-PP-Dol to produce Glc(2)Man(9)GlcNAc(2)-PP-Dol. Glc(2)Man(9)GlcNAc(2)-PP-Dol is a substrate for ALG10, the following enzyme in the biosynthetic pathway. Required for PKD1/Polycystin-1 maturation and localization to the plasma membrane of the primary cilia. The polypeptide is Dolichyl pyrophosphate Glc1Man9GlcNAc2 alpha-1,3-glucosyltransferase (Bos taurus (Bovine)).